Here is a 758-residue protein sequence, read N- to C-terminus: MTSPCSARLQLDENLQLMQAGSPMRKVKSRSWKKQRYFKLQEDCMTIWYNSKKTGNTKSTFSISDIETVREGHQSEVLQSIAEEFKPELCFTIVFHGRRANLDLVANTPEEAQCWIQGLEKLIETVTNMDRKDLMDQWICDWFQKADKNKDGRMNFKEVQDLLKMMNVDMSEHHAFRLFQMADKSESGTLEGEEFVLFYKALTQRDEVLKIFQDFSKDGKKLTLLEFVDFLQQGQLEEENTEEIAMDLIARYEPSDTAKKLHAMSIDGFLVYLCSPEGSIFNVAHEQLYQDMMQPLCHYFISSSHNTYLMEDQIRGQSSIEGYIRALKRGCRCVEVDTWDGPNGEPIVYHGRTFTSKILFKDVISAIDKYAFRVSDYPVILSLENHCGVEQQDAMAQHLKSILGNKLVMSTLDGRIPVRLPSPDELRGKILLKGKKIGRLEDSLEEQPDDSLGEVSDEEENIEVEEERNEDKKRAKKSKERLSQELSDCVIYCKSVPFVSFQHSRAHYILYEMSSVTEYKARKLVREPGNDFVRHNAWQLMRIYPTGLRTDSSNYNPQDMWNVGCQMTALNFQTAGVEMDLNDGLFRQNARCGYVLKPSFMRHVETTFNPDQPQGTEGYSPVNLSILVISAQQLPKVENSKEGSIVDPLVRVEIFGVPIDQTKQETKYIENNGFNPMWYETLHFKIHVPELALVRFVVEDYDKTSRNDFVGQYTLPFKSIKSGYRHIHLLSRDGTKIPPASLFVHIRVTDASQPEQDT.

A PH domain is found at 16 to 124; it reads QLMQAGSPMR…WIQGLEKLIE (109 aa). A substrate binding region spans residues 26–53; that stretch reads KVKSRSWKKQRYFKLQEDCMTIWYNSKK. EF-hand domains lie at 134-169, 170-205, and 206-237; these read LMDQ…MNVD, MSEH…LTQR, and DEVL…GQLE. Ca(2+)-binding residues include Asp147, Asn149, Asp151, Arg153, Glu158, Asp183, Ser185, Ser187, Thr189, and Glu194. Residues 213-243 carry the GBA motif; sequence QDFSKDGKKLTLLEFVDFLQQGQLEEENTEE. One can recognise a PI-PLC X-box domain in the interval 290–435; sequence QDMMQPLCHY…LRGKILLKGK (146 aa). His305 is a catalytic residue. Asn306, Glu335, and Asp337 together coordinate Ca(2+). His350 is a catalytic residue. Glu384 is a Ca(2+) binding site. Residues Lys433 and Lys435 each contribute to the substrate site. The segment covering 446–468 has biased composition (acidic residues); that stretch reads EQPDDSLGEVSDEEENIEVEEER. A disordered region spans residues 446-479; that stretch reads EQPDDSLGEVSDEEENIEVEEERNEDKKRAKKSK. The PI-PLC Y-box domain maps to 486–602; sequence LSDCVIYCKS…GYVLKPSFMR (117 aa). Substrate contacts are provided by Ser515 and Arg542. In terms of domain architecture, C2 spans 602–731; that stretch reads RHVETTFNPD…SGYRHIHLLS (130 aa). Ca(2+) is bound by residues Ile645, Asp647, Asn671, Asp700, Tyr701, and Asp702. The PDZ-binding signature appears at 726–729; sequence HIHL.

Ca(2+) is required as a cofactor.

It is found in the membrane. It localises to the nucleus. The protein localises to the cytoplasm. The protein resides in the endoplasmic reticulum. The catalysed reaction is a 1,2-diacyl-sn-glycero-3-phospho-(1D-myo-inositol-4,5-bisphosphate) + H2O = 1D-myo-inositol 1,4,5-trisphosphate + a 1,2-diacyl-sn-glycerol + H(+). The enzyme catalyses a 1,2-diacyl-sn-glycero-3-phospho-(1D-myo-inositol) + H2O = 1D-myo-inositol 1-phosphate + a 1,2-diacyl-sn-glycerol + H(+). Hydrolyzes the phosphatidylinositol 4,5-bisphosphate (PIP2) to generate 2 second messenger molecules diacylglycerol (DAG) and inositol 1,4,5-trisphosphate (IP3). DAG mediates the activation of protein kinase C (PKC), while IP3 releases Ca(2+) from intracellular stores. This chain is 1-phosphatidylinositol 4,5-bisphosphate phosphodiesterase delta-4 (plcd4), found in Xenopus laevis (African clawed frog).